The chain runs to 327 residues: tRNA N6-adenosine threonylcarbamoyltransferase (327 aa).

Histidine 109 and histidine 113 together coordinate Fe cation. Substrate contacts are provided by residues 132-136 (MVSGG), aspartate 165, glycine 178, aspartate 182, and asparagine 268. Aspartate 296 lines the Fe cation pocket.

The protein belongs to the KAE1 / TsaD family. In terms of assembly, forms a hexamer composed of two TsaB, TsaD and TsaE trimers. Fe(2+) is required as a cofactor.

It localises to the cytoplasm. It catalyses the reaction L-threonylcarbamoyladenylate + adenosine(37) in tRNA = N(6)-L-threonylcarbamoyladenosine(37) in tRNA + AMP + H(+). Its function is as follows. Required for the formation of a threonylcarbamoyl group on adenosine at position 37 (t(6)A37) in tRNAs that read codons beginning with adenine. Is involved in the transfer of the threonylcarbamoyl moiety of threonylcarbamoyl-AMP (TC-AMP) to the N6 group of A37, together with TsaE and TsaB. TsaD likely plays a direct catalytic role in this reaction. The sequence is that of tRNA N6-adenosine threonylcarbamoyltransferase from Thermotoga maritima (strain ATCC 43589 / DSM 3109 / JCM 10099 / NBRC 100826 / MSB8).